A 921-amino-acid chain; its full sequence is Isoleucine--tRNA ligase (921 aa).

Positions 57–67 match the 'HIGH' region motif; it reads PYANGELHMGH. Glu-552 contributes to the L-isoleucyl-5'-AMP binding site. The 'KMSKS' region motif lies at 593–597; the sequence is KMSKS. Lys-596 is an ATP binding site. Residues Cys-888, Cys-891, Cys-908, and Cys-911 each coordinate Zn(2+).

It belongs to the class-I aminoacyl-tRNA synthetase family. IleS type 1 subfamily. In terms of assembly, monomer. Zn(2+) serves as cofactor.

It is found in the cytoplasm. It catalyses the reaction tRNA(Ile) + L-isoleucine + ATP = L-isoleucyl-tRNA(Ile) + AMP + diphosphate. Catalyzes the attachment of isoleucine to tRNA(Ile). As IleRS can inadvertently accommodate and process structurally similar amino acids such as valine, to avoid such errors it has two additional distinct tRNA(Ile)-dependent editing activities. One activity is designated as 'pretransfer' editing and involves the hydrolysis of activated Val-AMP. The other activity is designated 'posttransfer' editing and involves deacylation of mischarged Val-tRNA(Ile). The polypeptide is Isoleucine--tRNA ligase (Listeria monocytogenes serovar 1/2a (strain ATCC BAA-679 / EGD-e)).